We begin with the raw amino-acid sequence, 432 residues long: Adenylosuccinate synthetase (432 aa).

GTP contacts are provided by residues 12–18 and 40–42; these read GDEGKGK and GHT. Asp-13 serves as the catalytic Proton acceptor. Residues Asp-13 and Gly-40 each coordinate Mg(2+). IMP contacts are provided by residues 13-16, 38-41, Thr-132, Arg-146, Gln-226, Thr-241, and Arg-305; these read DEGK and NAGH. His-41 functions as the Proton donor in the catalytic mechanism. 301–307 contributes to the substrate binding site; sequence TVTGRKR. Residues Arg-307, 333–335, and 415–417 contribute to the GTP site; these read KLD and STS.

It belongs to the adenylosuccinate synthetase family. In terms of assembly, homodimer. The cofactor is Mg(2+).

It localises to the cytoplasm. The enzyme catalyses IMP + L-aspartate + GTP = N(6)-(1,2-dicarboxyethyl)-AMP + GDP + phosphate + 2 H(+). Its pathway is purine metabolism; AMP biosynthesis via de novo pathway; AMP from IMP: step 1/2. In terms of biological role, plays an important role in the de novo pathway of purine nucleotide biosynthesis. Catalyzes the first committed step in the biosynthesis of AMP from IMP. The protein is Adenylosuccinate synthetase of Sinorhizobium medicae (strain WSM419) (Ensifer medicae).